We begin with the raw amino-acid sequence, 294 residues long: Glyceraldehyde-3-phosphate dehydrogenase (294 aa).

3 residues coordinate NAD(+): Asp-19, Arg-63, and Thr-105. D-glyceraldehyde 3-phosphate-binding positions include 134 to 136, Thr-165, 194 to 195, and Arg-217; these read SCT and TG. Cys-135 serves as the catalytic Nucleophile.

This sequence belongs to the glyceraldehyde-3-phosphate dehydrogenase family. In terms of assembly, homotetramer.

Its subcellular location is the cytoplasm. It carries out the reaction D-glyceraldehyde 3-phosphate + phosphate + NAD(+) = (2R)-3-phospho-glyceroyl phosphate + NADH + H(+). Its pathway is carbohydrate degradation; glycolysis; pyruvate from D-glyceraldehyde 3-phosphate: step 1/5. Its function is as follows. Catalyzes the oxidative phosphorylation of glyceraldehyde 3-phosphate (G3P) to 1,3-bisphosphoglycerate (BPG) using the cofactor NAD. The first reaction step involves the formation of a hemiacetal intermediate between G3P and a cysteine residue, and this hemiacetal intermediate is then oxidized to a thioester, with concomitant reduction of NAD to NADH. The reduced NADH is then exchanged with the second NAD, and the thioester is attacked by a nucleophilic inorganic phosphate to produce BPG. This chain is Glyceraldehyde-3-phosphate dehydrogenase (gap), found in Shimwellia blattae (Escherichia blattae).